The following is a 445-amino-acid chain: MNAYKKQKIGIFGLGKTGISVYEELKNKYDLIVYDDLEANRDIFKELFGNNLITVLSDSRWQDLDKIVLSPGVPLTHEVVRIAHHFNIPIISDIDLFFEKSKNLKFIAITGTNGKSTTTALISHILNSNGLDYPVAGNIGVPALQAKASNEGYVLELSSFQLDLVKSFTVKVAVLLNITPDHLDRYQDMNDYIAAKAKIFDRMDKDSYAVINIDNDYCRKIFVLLQKDQSIKLIPFSVTKILKNGISIVDDKIHDNDLTYKLPLNKNLQGLHNCENIAASYAVAKIIGLESKKILESISSFQSLHHRMQYIGSINNISFYNDSKATNAISALQSIKALDNIYWLAGGIPKEGGIEGIKPYFNKIKKAYFYGQAKAMFANTAKNIIDFVICDNLEYAFNIAYKDAVSDTTEVKNILLAPSCSSYDQFKNFEERGELFIKLSKRHWQ.

ATP is bound at residue 111 to 117; it reads GTNGKST.

It belongs to the MurCDEF family.

It is found in the cytoplasm. It carries out the reaction UDP-N-acetyl-alpha-D-muramoyl-L-alanine + D-glutamate + ATP = UDP-N-acetyl-alpha-D-muramoyl-L-alanyl-D-glutamate + ADP + phosphate + H(+). It functions in the pathway cell wall biogenesis; peptidoglycan biosynthesis. Functionally, cell wall formation. Catalyzes the addition of glutamate to the nucleotide precursor UDP-N-acetylmuramoyl-L-alanine (UMA). This chain is UDP-N-acetylmuramoylalanine--D-glutamate ligase (murD), found in Rickettsia prowazekii (strain Madrid E).